Consider the following 49-residue polypeptide: Large ribosomal subunit protein bL33 (49 aa).

It belongs to the bacterial ribosomal protein bL33 family.

The sequence is that of Large ribosomal subunit protein bL33 from Lacticaseibacillus casei (strain BL23) (Lactobacillus casei).